The sequence spans 73 residues: Large ribosomal subunit protein bL31 (73 aa).

Zn(2+) contacts are provided by C16, C18, C37, and C40.

The protein belongs to the bacterial ribosomal protein bL31 family. Type A subfamily. As to quaternary structure, part of the 50S ribosomal subunit. It depends on Zn(2+) as a cofactor.

Binds the 23S rRNA. The sequence is that of Large ribosomal subunit protein bL31 from Pseudomonas syringae pv. syringae (strain B728a).